Here is a 405-residue protein sequence, read N- to C-terminus: uncharacterized protein (405 aa).

12 helical membrane-spanning segments follow: residues 19–39 (IVSIVMFNFASYLTIGLPLAV), 47–67 (VMGFSAFWAGLVISLQYFATL), 85–105 (IVVFGLCGCFLSGLGYLTAGL), 107–127 (ASLPVISLLLLCLGRVILGIG), 156–176 (GIVTYGAMAMGAPLGVVFYHW), 178–198 (GLQALALIIMGVALVAILLAI), 224–244 (GMALALASAGFGVIATFITLF), 252–272 (GAAFALTLFSCAFVGTRLLFP), 283–303 (VAMICFSVEIIGLLLVGVATM), 309–329 (IGVLLAGAGFSLVFPALGVVA), 344–364 (TYTVFMDLSLGVTGPLAGLVM), and 366–386 (WAGVPVIYLAAAGLVAIALLL).

This sequence belongs to the major facilitator superfamily. YhhS family.

The protein resides in the cell inner membrane. This is an uncharacterized protein from Shigella flexneri.